The primary structure comprises 183 residues: Copper transporter 4 (183 aa).

The interval 1–21 (MAMPMPMPPPGPGGDAPPAPT) is disordered. 2 consecutive transmembrane segments (helical) span residues 56 to 76 (VGMY…AEAL) and 115 to 135 (LAYL…LAAV).

This sequence belongs to the copper transporter (Ctr) (TC 1.A.56) family. SLC31A subfamily.

It is found in the membrane. Functionally, involved in the transport of copper. This chain is Copper transporter 4 (COPT4), found in Oryza sativa subsp. japonica (Rice).